The following is a 504-amino-acid chain: Glycerol kinase (504 aa).

Thr-12 provides a ligand contact to ADP. ATP-binding residues include Thr-12, Thr-13, and Ser-14. Residue Thr-12 participates in sn-glycerol 3-phosphate binding. Arg-16 provides a ligand contact to ADP. Sn-glycerol 3-phosphate is bound by residues Arg-82, Glu-83, Tyr-134, and Asp-249. 5 residues coordinate glycerol: Arg-82, Glu-83, Tyr-134, Asp-249, and Gln-250. ADP is bound by residues Thr-271 and Gly-315. Residues Thr-271, Gly-315, Gln-319, and Gly-416 each contribute to the ATP site. Gly-416 and Asn-420 together coordinate ADP.

It belongs to the FGGY kinase family.

The enzyme catalyses glycerol + ATP = sn-glycerol 3-phosphate + ADP + H(+). It participates in polyol metabolism; glycerol degradation via glycerol kinase pathway; sn-glycerol 3-phosphate from glycerol: step 1/1. Inhibited by fructose 1,6-bisphosphate (FBP). Functionally, key enzyme in the regulation of glycerol uptake and metabolism. Catalyzes the phosphorylation of glycerol to yield sn-glycerol 3-phosphate. The polypeptide is Glycerol kinase (Mycobacteroides abscessus (strain ATCC 19977 / DSM 44196 / CCUG 20993 / CIP 104536 / JCM 13569 / NCTC 13031 / TMC 1543 / L948) (Mycobacterium abscessus)).